The chain runs to 125 residues: Small ribosomal subunit protein uS13 (125 aa).

The interval 101–125 (QRTKTNARTRKGKRKTVANKKIAAK) is disordered.

This sequence belongs to the universal ribosomal protein uS13 family. Part of the 30S ribosomal subunit. Forms a loose heterodimer with protein S19. Forms two bridges to the 50S subunit in the 70S ribosome.

Its function is as follows. Located at the top of the head of the 30S subunit, it contacts several helices of the 16S rRNA. In the 70S ribosome it contacts the 23S rRNA (bridge B1a) and protein L5 of the 50S subunit (bridge B1b), connecting the 2 subunits; these bridges are implicated in subunit movement. Contacts the tRNAs in the A and P-sites. The polypeptide is Small ribosomal subunit protein uS13 (Borrelia duttonii (strain Ly)).